The following is a 277-amino-acid chain: Short chain dehydrogenase penD (277 aa).

3 residues coordinate NADP(+): Ile-28, Asp-76, and Asn-105. Residues Ser-158 and Ser-159 each act as proton donor in the active site. 3 residues coordinate NADP(+): Tyr-173, Lys-177, and Thr-209. Catalysis depends on Tyr-173, which acts as the Proton acceptor. Catalysis depends on Lys-177, which acts as the Lowers pKa of active site Tyr.

Belongs to the short-chain dehydrogenases/reductases (SDR) family.

It catalyses the reaction yaequinolone D + NADPH + H(+) = penigequinolone A + NADP(+) + H2O. The catalysed reaction is yaequinolone D + NADPH + H(+) = penigequinolone B + NADP(+) + H2O. The protein operates within secondary metabolite biosynthesis. Its pathway is alkaloid biosynthesis. It participates in mycotoxin biosynthesis. Functionally, short chain dehydrogenase; part of the gene cluster that mediates the biosynthesis of penigequinolones, potent insecticidal alkaloids that contain a highly modified 10-carbon prenyl group. The first stage is catalyzed by the nonribosomal peptide synthetase penN that condenses anthranilic acid and O-methyl-L-tyrosine to produce 4'-methoxycyclopeptin. 4'-methoxycyclopeptin is then converted to 4'-methoxydehydrocyclopeptin by the ketoglutarate-dependent dioxygenase penM through dehydrogenation to form a double bond between C-alpha and C-beta of the O-methyltyrosine side chain. PenM also converts its first product methoxydehydrocyclopeptin to 4'-methoxycyclopenin. The following conversion of 4'methoxycyclopenin into 4'-methoxyviridicatin is catalyzed by the cyclopenase penL. 4'-methoxyviridicatin is the precursor of quinolone natural products, and is further converted to quinolinone B. The prenyltransferase penI then catalyzes the canonical Friedel-Crafts alkylation of quinolinone B with dimethylallyl cation to yield dimethylallyl quinolone, which is subjected to FAD-dependent dehydrogenation by the FAD-linked oxidoreductase penH to yield conjugated aryl diene. The delta(3') double bond then serves as the site of the second alkylation with DMAPP catalyzed by the prenyltransferase penG to yield a carbenium ion intermediate, which can be attacked by H(2)O to yield a styrenyl quinolone containing a C3'-hydroxyprenyl chain, or undergo cyclization to yield yaequinolones J1 and J2. The conversion of the styrenyl quinolone into the tetrahydrofuran-containing yaequinolone C is performed by the FAD-dependent monooxygenase penE and involves epoxidation of the terminal C7'-C8' olefin, followed by epoxide ring opening initiated by the C3' hydroxyl group. The predicted cysteine hydrolase penJ acts as an epoxide hydrolase that enhances the rate of the 5-exo-tet cyclization step, increasing the yield of yaequinolone C. PenF catalyzes the cationic rearrangement of the epoxide formed by penE (before ring opening to produce yaequinolone C) into yaequinolone D. Finally, the short-chain dehydrogenase/reductase (SDR)-like reductase penD, catalyzes both the dehydration of yaequinolone D and the reduction of the resulting oxonium to yield penigequinolone. The polypeptide is Short chain dehydrogenase penD (Penicillium thymicola).